The following is a 143-amino-acid chain: Na(+)/H(+) antiporter subunit B (143 aa).

A run of 4 helical transmembrane segments spans residues 9-31 (LILQ…YLFL), 36-58 (APGG…LLAY), 71-93 (FIYV…FVFG), and 117-139 (ATIF…IQTI).

It belongs to the CPA3 antiporters (TC 2.A.63) subunit B family. In terms of assembly, forms a heterooligomeric complex that consists of seven subunits: MrpA, MrpB, MrpC, MrpD, MrpE, MrpF and MrpG.

The protein localises to the cell membrane. Its function is as follows. Mrp complex is a Na(+)/H(+) antiporter that is considered to be the major Na(+) excretion system in B.subtilis. Has a major role in Na(+) resistance and a minor role in Na(+)- and K(+)-dependent pH homeostasis as compared to TetB. MrpA may be the actual Na(+)/H(+) antiporter, although the six other Mrp proteins are all required for Na(+)/H(+) antiport activity and Na(+) resistance. MrpA is required for initiation of sporulation when external Na(+) concentration increases. Also transports Li(+) but not K(+), Ca(2+) or Mg(2+). This Bacillus subtilis (strain 168) protein is Na(+)/H(+) antiporter subunit B (mrpB).